The primary structure comprises 317 residues: Beta-ketoacyl-[acyl-carrier-protein] synthase III (317 aa).

Catalysis depends on residues cysteine 112 and histidine 244. The segment at 245–249 (QANIR) is ACP-binding. Asparagine 274 is an active-site residue.

It belongs to the thiolase-like superfamily. FabH family. In terms of assembly, homodimer.

The protein resides in the cytoplasm. The catalysed reaction is malonyl-[ACP] + acetyl-CoA + H(+) = 3-oxobutanoyl-[ACP] + CO2 + CoA. The protein operates within lipid metabolism; fatty acid biosynthesis. Catalyzes the condensation reaction of fatty acid synthesis by the addition to an acyl acceptor of two carbons from malonyl-ACP. Catalyzes the first condensation reaction which initiates fatty acid synthesis and may therefore play a role in governing the total rate of fatty acid production. Possesses both acetoacetyl-ACP synthase and acetyl transacylase activities. Its substrate specificity determines the biosynthesis of branched-chain and/or straight-chain of fatty acids. The sequence is that of Beta-ketoacyl-[acyl-carrier-protein] synthase III from Rickettsia prowazekii (strain Madrid E).